The following is a 174-amino-acid chain: Probable calcium-binding protein CML20 (174 aa).

A lipid anchor (N-myristoyl glycine) is attached at G2. The interval 14–35 (LRRSRSRSPPPAVLDPSQSPLS) is disordered. EF-hand domains are found at residues 39–74 (EAEP…SVDE), 75–100 (AEEM…AVME), 102–137 (GGLD…LNLD), and 141–174 (LTAE…SKQA). Residues D52, D54, D56, E63, D83, D85, D87, E94, D115, D117, N119, E126, D154, D156, D158, and E165 each contribute to the Ca(2+) site.

Its function is as follows. Potential calcium sensor. This chain is Probable calcium-binding protein CML20 (CML20), found in Oryza sativa subsp. japonica (Rice).